We begin with the raw amino-acid sequence, 873 residues long: Leucine--tRNA ligase (873 aa).

The short motif at 42–52 (PYPSGKLHMGH) is the 'HIGH' region element. A 'KMSKS' region motif is present at residues 628–632 (KMAKS). Position 631 (Lys631) interacts with ATP.

The protein belongs to the class-I aminoacyl-tRNA synthetase family.

The protein resides in the cytoplasm. The enzyme catalyses tRNA(Leu) + L-leucine + ATP = L-leucyl-tRNA(Leu) + AMP + diphosphate. The polypeptide is Leucine--tRNA ligase (Aromatoleum aromaticum (strain DSM 19018 / LMG 30748 / EbN1) (Azoarcus sp. (strain EbN1))).